Reading from the N-terminus, the 152-residue chain is Large ribosomal subunit protein bL9 (152 aa).

It belongs to the bacterial ribosomal protein bL9 family.

Functionally, binds to the 23S rRNA. The sequence is that of Large ribosomal subunit protein bL9 from Gloeothece citriformis (strain PCC 7424) (Cyanothece sp. (strain PCC 7424)).